Reading from the N-terminus, the 114-residue chain is TYRO protein tyrosine kinase-binding protein (114 aa).

The signal sequence occupies residues 1–21 (MGALEPSWCLLFLPVLLTVGG). Residues 22–42 (LSPVQAQSDTFPRCDCSSVSP) are Extracellular-facing. A helical membrane pass occupies residues 43–63 (GVLAGIVLGDLVLTLLIALAV). Position 52 (Asp-52) interacts with Ca(2+). Over 64-114 (YSLGRLVSRGQGTAEGTRKQHIAETESPYQELQGQRPEVYSDLNTQRQYYR) the chain is Cytoplasmic. The tract at residues 74 to 107 (QGTAEGTRKQHIAETESPYQELQGQRPEVYSDLN) is disordered. One can recognise an ITAM domain in the interval 81-109 (RKQHIAETESPYQELQGQRPEVYSDLNTQ). A phosphotyrosine mark is found at Tyr-92 and Tyr-103.

The protein belongs to the TYROBP family. In terms of assembly, homodimer; disulfide-linked. Homotrimer; disulfide-linked. Homotetramer; disulfide-linked. Homotrimers and homotetramers form when low levels of partner receptors are available and are competitive with assembly with interacting receptors. They may represent alternative oligomerization states or may be intermediates in the receptor assembly process. Binding of a metal cation aids in homooligomerization through coordination of the metal ion by the subunits of the oligomer. Interacts with TREM1. Interacts with TREM2. Interacts with TREM3. Interacts with CLECSF5. Interacts with CD300LB and CD300C2. Interacts with CD300E. Interacts (via ITAM domain) with SYK (via SH2 domains); activates SYK mediating neutrophil and macrophage integrin-mediated activation. Interacts (via transmembrane domain) with KLRK1 isoform 2 (via transmembrane domain); the interaction is required for KLRK1 NK cell surface expression and NK cell-mediated cytotoxicity. Interacts with KLRC2. Interacts with CD300H. Interacts with KLRD1. Interacts with KLRA4 and KLRA8. Tyrosine phosphorylated. Following ligand binding by associated receptors, tyrosine phosphorylated in the ITAM domain which leads to activation of additional tyrosine kinases and subsequent cell activation. Expressed on microglia (at protein level). Expressed on oligodendrocytes (at protein level). Expressed on macrophages and osteoclasts. Expressed on dendritic cells in liver, spleen, kidney and lung with highest levels in liver dendritic cells.

It is found in the cell membrane. Functionally, adapter protein which non-covalently associates with activating receptors found on the surface of a variety of immune cells to mediate signaling and cell activation following ligand binding by the receptors. TYROBP is tyrosine-phosphorylated in the ITAM domain following ligand binding by the associated receptors which leads to activation of additional tyrosine kinases and subsequent cell activation. Also has an inhibitory role in some cells. Non-covalently associates with activating receptors of the CD300 family to mediate cell activation. Also mediates cell activation through association with activating receptors of the CD200R family. Required for neutrophil activation mediated by integrin. Required for the activation of myeloid cells mediated by the CLEC5A/MDL1 receptor. Associates with natural killer (NK) cell receptors such as the KLRD1/KLRC2 heterodimer to mediate NK cell activation. Also associates non-covalently with the NK cell receptors KLRA4/LY49D and KLRA8/LY49H which leads to NK cell activation. Associates with TREM1 to mediate activation of neutrophils and monocytes. Associates with TREM2 on monocyte-derived dendritic cells to mediate up-regulation of chemokine receptor CCR7 and dendritic cell maturation and survival. Association with TREM2 mediates cytokine-induced formation of multinucleated giant cells which are formed by the fusion of macrophages. Stabilizes the TREM2 C-terminal fragment (TREM2-CTF) which is produced by TREM2 ectodomain shedding. In microglia, required with TREM2 for phagocytosis of apoptotic neurons. Required with ITGAM/CD11B in microglia to control production of microglial superoxide ions which promote the neuronal apoptosis that occurs during brain development. Promotes pro-inflammatory responses in microglia following nerve injury which accelerates degeneration of injured neurons. Positively regulates the expression of the IRAK3/IRAK-M kinase and IL10 production by liver dendritic cells and inhibits their T cell allostimulatory ability. Negatively regulates B cell proliferation. Required for CSF1-mediated osteoclast cytoskeletal organization. Positively regulates multinucleation during osteoclast development. The chain is TYRO protein tyrosine kinase-binding protein from Mus musculus (Mouse).